A 559-amino-acid polypeptide reads, in one-letter code: Suppressor of tumorigenicity 7 protein-like (559 aa).

A run of 3 helical transmembrane segments spans residues 39-59 (GLAN…LYAL), 83-103 (FYVA…IFEW), and 513-533 (LPFF…LAFL).

This sequence belongs to the ST7 family. As to expression, ubiquitously expressed.

The protein localises to the membrane. The protein is Suppressor of tumorigenicity 7 protein-like (St7l) of Mus musculus (Mouse).